The following is a 360-amino-acid chain: Chorismate synthase (360 aa).

Residues Arg-48 and Arg-54 each coordinate NADP(+). Residues 125-127 (RSS), 246-247 (NA), Gly-286, 301-305 (KPTSS), and Arg-327 each bind FMN.

The protein belongs to the chorismate synthase family. As to quaternary structure, homotetramer. FMNH2 serves as cofactor.

The catalysed reaction is 5-O-(1-carboxyvinyl)-3-phosphoshikimate = chorismate + phosphate. The protein operates within metabolic intermediate biosynthesis; chorismate biosynthesis; chorismate from D-erythrose 4-phosphate and phosphoenolpyruvate: step 7/7. Catalyzes the anti-1,4-elimination of the C-3 phosphate and the C-6 proR hydrogen from 5-enolpyruvylshikimate-3-phosphate (EPSP) to yield chorismate, which is the branch point compound that serves as the starting substrate for the three terminal pathways of aromatic amino acid biosynthesis. This reaction introduces a second double bond into the aromatic ring system. This is Chorismate synthase from Actinobacillus pleuropneumoniae serotype 5b (strain L20).